The primary structure comprises 252 residues: tRNA (guanine-N(1)-)-methyltransferase (252 aa).

Residues Gly-113 and 133–138 each bind S-adenosyl-L-methionine; that span reads IGDYVL.

This sequence belongs to the RNA methyltransferase TrmD family. In terms of assembly, homodimer.

The protein resides in the cytoplasm. It catalyses the reaction guanosine(37) in tRNA + S-adenosyl-L-methionine = N(1)-methylguanosine(37) in tRNA + S-adenosyl-L-homocysteine + H(+). Specifically methylates guanosine-37 in various tRNAs. The polypeptide is tRNA (guanine-N(1)-)-methyltransferase (Baumannia cicadellinicola subsp. Homalodisca coagulata).